A 134-amino-acid chain; its full sequence is Holo-[acyl-carrier-protein] synthase (134 aa).

Positions 8 and 57 each coordinate Mg(2+).

It belongs to the P-Pant transferase superfamily. AcpS family. Mg(2+) serves as cofactor.

The protein resides in the cytoplasm. The catalysed reaction is apo-[ACP] + CoA = holo-[ACP] + adenosine 3',5'-bisphosphate + H(+). Its function is as follows. Transfers the 4'-phosphopantetheine moiety from coenzyme A to a Ser of acyl-carrier-protein. This chain is Holo-[acyl-carrier-protein] synthase, found in Roseobacter denitrificans (strain ATCC 33942 / OCh 114) (Erythrobacter sp. (strain OCh 114)).